Consider the following 691-residue polypeptide: DNA ligase (691 aa).

NAD(+) contacts are provided by residues 41–45 (DAEYD), 90–91 (SL), and glutamate 130. Lysine 132 serves as the catalytic N6-AMP-lysine intermediate. Arginine 153, glutamate 190, lysine 307, and lysine 331 together coordinate NAD(+). Residues cysteine 425, cysteine 428, cysteine 443, and cysteine 449 each contribute to the Zn(2+) site. A BRCT domain is found at 610–691 (APQGVLAGKT…MHTLLEGHAR (82 aa)).

The protein belongs to the NAD-dependent DNA ligase family. LigA subfamily. It depends on Mg(2+) as a cofactor. Mn(2+) serves as cofactor.

It carries out the reaction NAD(+) + (deoxyribonucleotide)n-3'-hydroxyl + 5'-phospho-(deoxyribonucleotide)m = (deoxyribonucleotide)n+m + AMP + beta-nicotinamide D-nucleotide.. DNA ligase that catalyzes the formation of phosphodiester linkages between 5'-phosphoryl and 3'-hydroxyl groups in double-stranded DNA using NAD as a coenzyme and as the energy source for the reaction. It is essential for DNA replication and repair of damaged DNA. In Burkholderia pseudomallei (strain K96243), this protein is DNA ligase.